Consider the following 1481-residue polypeptide: ABC-type transporter braE (1481 aa).

Helical transmembrane passes span 27–47, 86–106, 130–150, 159–179, 269–289, and 308–328; these read FTVKFEQLCFSLTPAAIFILA, LILITVLPFGASGIDIISSAL, IFLSAYLFFTLLFDIAQARTY, EIAFTAIFTAALAMKIAMLLL, LYVPMILPIPAKLAAIGSFFC, and PANIGYGFIGASICIYSVIAI. In terms of domain architecture, ABC transmembrane type-1 1 spans 281 to 549; the sequence is LAAIGSFFCQ…LLETLPQMAA (269 aa). An N-linked (GlcNAc...) asparagine glycan is attached at Asn-367. The next 3 helical transmembrane spans lie at 389-409, 410-430, and 491-511; these read ELWGNVIEVALSAWLLYNLLG, VAFIAPIVVVCICVGGVSFFM, and LMLTCSVFAYIPLLLSPPITF. Residues 594 to 823 form the ABC transporter 1 domain; that stretch reads VAIKDGSFGW…QSYIHSLGVK (230 aa). An ATP-binding site is contributed by 627–634; it reads GPIASGKS. Asn-671 and Asn-813 each carry an N-linked (GlcNAc...) asparagine glycan. Transmembrane regions (helical) follow at residues 887–907, 928–948, 1001–1021, 1026–1046, 1111–1131, and 1144–1164; these read IAIFTSGLLYGFFYNFPTIWL, AIYAVLEVCAMLSLIWLGVLL, SALLNVIYMVFVGIGQAAVIA, YLAISYPFLFGMLYVVQKFYL, LHFVLNVVVAIIAVMLTSLAV, and LVTLMSFGEMLSGVVIYYTAL. One can recognise an ABC transmembrane type-1 2 domain in the interval 887 to 1166; that stretch reads IAIFTSGLLY…VVIYYTALET (280 aa). N-linked (GlcNAc...) asparagine glycans are attached at residues Asn-1207 and Asn-1232. In terms of domain architecture, ABC transporter 2 spans 1224–1477; the sequence is LTTNELSSND…PGTRFGELWS (254 aa). Residue 1260-1267 coordinates ATP; sequence GRTGSGKS. Residues Asn-1330 and Asn-1364 are each glycosylated (N-linked (GlcNAc...) asparagine).

Belongs to the ABC transporter superfamily. ABCC family. Conjugate transporter (TC 3.A.1.208) subfamily.

The protein localises to the membrane. ABC-type transporter; part of the gene cluster that mediates the biosynthesis of the brasilane terpene glycosides brasilane D and E. In Annulohypoxylon truncatum (Hypoxylon truncatum), this protein is ABC-type transporter braE.